Consider the following 227-residue polypeptide: DNA repair protein RecO (227 aa).

It belongs to the RecO family.

In terms of biological role, involved in DNA repair and RecF pathway recombination. This is DNA repair protein RecO from Pseudomonas syringae pv. syringae (strain B728a).